We begin with the raw amino-acid sequence, 179 residues long: Large ribosomal subunit protein uL5 (179 aa).

It belongs to the universal ribosomal protein uL5 family. In terms of assembly, part of the 50S ribosomal subunit; part of the 5S rRNA/L5/L18/L25 subcomplex. Contacts the 5S rRNA and the P site tRNA. Forms a bridge to the 30S subunit in the 70S ribosome.

This is one of the proteins that bind and probably mediate the attachment of the 5S RNA into the large ribosomal subunit, where it forms part of the central protuberance. In the 70S ribosome it contacts protein S13 of the 30S subunit (bridge B1b), connecting the 2 subunits; this bridge is implicated in subunit movement. Contacts the P site tRNA; the 5S rRNA and some of its associated proteins might help stabilize positioning of ribosome-bound tRNAs. This Pectobacterium carotovorum subsp. carotovorum (strain PC1) protein is Large ribosomal subunit protein uL5.